The primary structure comprises 234 residues: uncharacterized protein (234 aa).

Residues 199–234 (DNQNEPLENYSDDNNFSNFDETEHVDDSEMNDDNFI) form a disordered region.

This is an uncharacterized protein from Buchnera aphidicola subsp. Schizaphis graminum (strain Sg).